We begin with the raw amino-acid sequence, 230 residues long: Probable C4-dicarboxylate response regulator DctR (230 aa).

Residues 8 to 124 (RVLLIEDDPM…RLKAALTQYE (117 aa)) enclose the Response regulatory domain. Residue Asp-59 is modified to 4-aspartylphosphate. A DNA-binding region (H-T-H motif) is located at residues 183–209 (EEIGRDVGLARVTVRRYLNYLESVGQV).

Post-translationally, phosphorylated by DctS.

Its subcellular location is the cytoplasm. Functionally, member of the two-component regulatory system DctS/DctR. Essential for expression of DctP. In Halalkalibacterium halodurans (strain ATCC BAA-125 / DSM 18197 / FERM 7344 / JCM 9153 / C-125) (Bacillus halodurans), this protein is Probable C4-dicarboxylate response regulator DctR (dctR).